The chain runs to 135 residues: Crustacean hyperglycemic hormones A* (135 aa).

Positions Met1 to Gly26 are cleaved as a signal peptide. Position 62 is a pyrrolidone carboxylic acid (Gln62). Disulfide bonds link Cys68–Cys104, Cys84–Cys100, and Cys87–Cys113. The residue at position 133 (Val133) is a Valine amide.

It belongs to the arthropod CHH/MIH/GIH/VIH hormone family. In terms of tissue distribution, produced by the medulla terminalis X-organ in the eyestalks and transported to the sinus gland where they are stored and released.

It localises to the secreted. Hormone found in the sinus gland of isopods and decapods which controls the blood sugar level. Has a secretagogue action over the amylase released from the midgut gland. May act as a stress hormone and may be involved in the control of molting and reproduction. This is Crustacean hyperglycemic hormones A* (CHHA*) from Faxonius limosus (Spinycheek crayfish).